The chain runs to 805 residues: Leucine--tRNA ligase (805 aa).

The 'HIGH' region motif lies at 40-51 (PYPSGSGLHVGH). The short motif at 576–580 (KMSKS) is the 'KMSKS' region element. Residue Lys579 participates in ATP binding.

Belongs to the class-I aminoacyl-tRNA synthetase family.

The protein resides in the cytoplasm. It carries out the reaction tRNA(Leu) + L-leucine + ATP = L-leucyl-tRNA(Leu) + AMP + diphosphate. This is Leucine--tRNA ligase from Chloroherpeton thalassium (strain ATCC 35110 / GB-78).